Here is a 446-residue protein sequence, read N- to C-terminus: Glycine--tRNA ligase (446 aa).

The substrate site is built by Arg-100 and Glu-158. ATP-binding positions include 190–192 (RNE), 200–205 (FRTREF), 275–276 (EL), and 319–322 (GIER). A substrate-binding site is contributed by 205–209 (FEQFE). Substrate is bound at residue 315 to 319 (EPAVG).

Belongs to the class-II aminoacyl-tRNA synthetase family. As to quaternary structure, homodimer.

It is found in the cytoplasm. It catalyses the reaction tRNA(Gly) + glycine + ATP = glycyl-tRNA(Gly) + AMP + diphosphate. Functionally, catalyzes the attachment of glycine to tRNA(Gly). The polypeptide is Glycine--tRNA ligase (Mycoplasma genitalium (strain ATCC 33530 / DSM 19775 / NCTC 10195 / G37) (Mycoplasmoides genitalium)).